The following is a 4493-amino-acid chain: MPRPGTMALCLLTLVLSLLPPQAAAEQDLSVNRAVWDGGGCISQGDVLNRQCQQLSQHVRTGSAANTATGTTSTNVVEPRMYLSCSTNPEMTSIESSVTSDTPGVSSTRMTPTESRTTSESTSDSTTLFPSSTEDTSSPTTPEGTDVPMSTPSEESISSTMAFVSTAPLPSFEAYTSLTYKVDMSTPLTTSTQASSSPTTPESTTIPKSTNSEGSTPLTSMPASTMKVASSEAITLLTTPVEISTPVTISAQASSSPTTAEGPSLSNSAPSGGSTPLTRMPLSVMLVVSSEASTLSTTPAATNIPVITSTEASSSPTTAEGTSIPTSTYTEGSTPLTSTPASTMPVATSEMSTLSITPVDTSTLVTTSTEPSSLPTTAEATSMLTSTLSEGSTPLTNMPVSTILVASSEASTTSTIPVDSKTFVTTASEASSSPTTAEDTSIATSTPSEGSTPLTSMPVSTTPVASSEASNLSTTPVDSKTQVTTSTEASSSPPTAEVNSMPTSTPSEGSTPLTSMSVSTMPVASSEASTLSTTPVDTSTPVTTSSEASSSSTTPEGTSIPTSTPSEGSTPLTNMPVSTRLVVSSEASTTSTTPADSNTFVTTSSEASSSSTTAEGTSMPTSTYSERGTTITSMSVSTTLVASSEASTLSTTPVDSNTPVTTSTEATSSSTTAEGTSMPTSTYTEGSTPLTSMPVNTTLVASSEASTLSTTPVDTSTPVTTSTEASSSPTTADGASMPTSTPSEGSTPLTSMPVSKTLLTSSEASTLSTTPLDTSTHITTSTEASCSPTTTEGTSMPISTPSEGSPLLTSIPVSITPVTSPEASTLSTTPVDSNSPVTTSTEVSSSPTPAEGTSMPTSTYSEGRTPLTSMPVSTTLVATSAISTLSTTPVDTSTPVTNSTEARSSPTTSEGTSMPTSTPGEGSTPLTSMPDSTTPVVSSEARTLSATPVDTSTPVTTSTEATSSPTTAEGTSIPTSTPSEGTTPLTSTPVSHTLVANSEASTLSTTPVDSNTPLTTSTEASSPPPTAEGTSMPTSTPSEGSTPLTRMPVSTTMVASSETSTLSTTPADTSTPVTTYSQASSSSTTADGTSMPTSTYSEGSTPLTSVPVSTRLVVSSEASTLSTTPVDTSIPVTTSTEASSSPTTAEGTSIPTSPPSEGTTPLASMPVSTTLVVSSEANTLSTTPVDSKTQVATSTEASSPPPTAEVTSMPTSTPGERSTPLTSMPVRHTPVASSEASTLSTSPVDTSTPVTTSAETSSSPTTAEGTSLPTSTTSEGSTLLTSIPVSTTLVTSPEASTLLTTPVDTKGPVVTSNEVSSSPTPAEGTSMPTSTYSEGRTPLTSIPVNTTLVASSAISILSTTPVDNSTPVTTSTEACSSPTTSEGTSMPNSNPSEGTTPLTSIPVSTTPVVSSEASTLSATPVDTSTPGTTSAEATSSPTTAEGISIPTSTPSEGKTPLKSIPVSNTPVANSEASTLSTTPVDSNSPVVTSTAVSSSPTPAEGTSIAISTPSEGSTALTSIPVSTTTVASSEINSLSTTPAVTSTPVTTYSQASSSPTTADGTSMQTSTYSEGSTPLTSLPVSTMLVVSSEANTLSTTPIDSKTQVTASTEASSSTTAEGSSMTISTPSEGSPLLTSIPVSTTPVASPEASTLSTTPVDSNSPVITSTEVSSSPTPAEGTSMPTSTYTEGRTPLTSITVRTTPVASSAISTLSTTPVDNSTPVTTSTEARSSPTTSEGTSMPNSTPSEGTTPLTSIPVSTTPVLSSEASTLSATPIDTSTPVTTSTEATSSPTTAEGTSIPTSTLSEGMTPLTSTPVSHTLVANSEASTLSTTPVDSNSPVVTSTAVSSSPTPAEGTSIATSTPSEGSTALTSIPVSTTTVASSETNTLSTTPAVTSTPVTTYAQVSSSPTTADGSSMPTSTPREGRPPLTSIPVSTTTVASSEINTLSTTLADTRTPVTTYSQASSSPTTADGTSMPTPAYSEGSTPLTSMPLSTTLVVSSEASTLSTTPVDTSTPATTSTEGSSSPTTAGGTSIQTSTPSERTTPLAGMPVSTTLVVSSEGNTLSTTPVDSKTQVTNSTEASSSATAEGSSMTISAPSEGSPLLTSIPLSTTPVASPEASTLSTTPVDSNSPVITSTEVSSSPIPTEGTSMQTSTYSDRRTPLTSMPVSTTVVASSAISTLSTTPVDTSTPVTNSTEARSSPTTSEGTSMPTSTPSEGSTPFTSMPVSTMPVVTSEASTLSATPVDTSTPVTTSTEATSSPTTAEGTSIPTSTLSEGTTPLTSIPVSHTLVANSEVSTLSTTPVDSNTPFTTSTEASSPPPTAEGTSMPTSTSSEGNTPLTRMPVSTTMVASFETSTLSTTPADTSTPVTTYSQAGSSPTTADDTSMPTSTYSEGSTPLTSVPVSTMPVVSSEASTHSTTPVDTSTPVTTSTEASSSPTTAEGTSIPTSPPSEGTTPLASMPVSTTPVVSSEAGTLSTTPVDTSTPMTTSTEASSSPTTAEDIVVPISTASEGSTLLTSIPVSTTPVASPEASTLSTTPVDSNSPVVTSTEISSSATSAEGTSMPTSTYSEGSTPLRSMPVSTKPLASSEASTLSTTPVDTSIPVTTSTETSSSPTTAKDTSMPISTPSEVSTSLTSILVSTMPVASSEASTLSTTPVDTRTLVTTSTGTSSSPTTAEGSSMPTSTPGERSTPLTNILVSTTLLANSEASTLSTTPVDTSTPVTTSAEASSSPTTAEGTSMRISTPSDGSTPLTSILVSTLPVASSEASTVSTTAVDTSIPVTTSTEASSSPTTAEVTSMPTSTPSETSTPLTSMPVNHTPVASSEAGTLSTTPVDTSTPVTTSTKASSSPTTAEGIVVPISTASEGSTLLTSIPVSTTPVASSEASTLSTTPVDTSIPVTTSTEGSSSPTTAEGTSMPISTPSEVSTPLTSILVSTVPVAGSEASTLSTTPVDTRTPVTTSAEASSSPTTAEGTSMPISTPGERRTPLTSMSVSTMPVASSEASTLSRTPADTSTPVTTSTEASSSPTTAEGTGIPISTPSEGSTPLTSIPVSTTPVAIPEASTLSTTPVDSNSPVVTSTEVSSSPTPAEGTSMPISTYSEGSTPLTGVPVSTTPVTSSAISTLSTTPVDTSTPVTTSTEAHSSPTTSEGTSMPTSTPSEGSTPLTYMPVSTMLVVSSEDSTLSATPVDTSTPVTTSTEATSSTTAEGTSIPTSTPSEGMTPLTSVPVSNTPVASSEASILSTTPVDSNTPLTTSTEASSSPPTAEGTSMPTSTPSEGSTPLTSMPVSTTTVASSETSTLSTTPADTSTPVTTYSQASSSPPIADGTSMPTSTYSEGSTPLTNMSFSTTPVVSSEASTLSTTPVDTSTPVTTSTEASLSPTTAEGTSIPTSSPSEGTTPLASMPVSTTPVVSSEVNTLSTTPVDSNTLVTTSTEASSSPTIAEGTSLPTSTTSEGSTPLSIMPLSTTPVASSEASTLSTTPVDTSTPVTTSSPTNSSPTTAEVTSMPTSTAGEGSTPLTNMPVSTTPVASSEASTLSTTPVDSNTFVTSSSQASSSPATLQVTTMRMSTPSEGSSSLTTMLLSSTYVTSSEASTPSTPSVDRSTPVTTSTQSNSTPTPPEVITLPMSTPSEVSTPLTIMPVSTTSVTISEAGTASTLPVDTSTPVITSTQVSSSPVTPEGTTMPIWTPSEGSTPLTTMPVSTTRVTSSEGSTLSTPSVVTSTPVTTSTEAISSSATLDSTTMSVSMPMEISTLGTTILVSTTPVTRFPESSTPSIPSVYTSMSMTTASEGSSSPTTLEGTTTMPMSTTSERSTLLTTVLISPISVMSPSEASTLSTPPGDTSTPLLTSTKAGSFSIPAEVTTIRISITSERSTPLTTLLVSTTLPTSFPGASIASTPPLDTSTTFTPSTDTASTPTIPVATTISVSVITEGSTPGTTIFIPSTPVTSSTADVFPATTGAVSTPVITSTELNTPSTSSSSTTTSFSTTKEFTTPAMTTAAPLTYVTMSTAPSTPRTTSRGCTTSASTLSATSTPHTSTSVTTRPVTPSSESSRPSTITSHTIPPTFPPAHSSTPPTTSASSTTVNPEAVTTMTTRTKPSTRTTSFPTVTTTAVPTNTTIKSNPTSTPTVPRTTTCFGDGCQNTASRCKNGGTWDGLKCQCPNLYYGELCEEVVSSIDIGPPETISAQMELTVTVTSVKFTEELKNHSSQEFQEFKQTFTEQMNIVYSGIPEYVGVNITKLRLGSVVVEHDVLLRTKYTPEYKTVLDNATEVVKEKITKVTTQQIMINDICSDMMCFNTTGTQVQNITVTQYDPEEDCRKMAKEYGDYFVVEYRDQKPYCISPCEPGFSVSKNCNLGKCQMSLSGPQCLCVTTETHWYSGETCNQGTQKSLVYGLVGAGVVLMLIILVALLMLVFRSKREVKRQKYRLSQLYKWQEEDSGPAPGTFQNIGFDICQDDDSIHLESIYSNFQPSLRHIDPETKIRIQRPQVMTTSF.

A signal peptide spans 1–25; the sequence is MPRPGTMALCLLTLVLSLLPPQAAA. Over 26-4393 the chain is Extracellular; the sequence is EQDLSVNRAV…QGTQKSLVYG (4368 aa). Residues 88–105 are compositionally biased toward polar residues; the sequence is NPEMTSIESSVTSDTPGV. 4 disordered regions span residues 88–159, 188–223, 248–277, and 306–344; these read NPEM…SISS, LTTS…SMPA, TISA…STPL, and VITS…ASTM. Low complexity predominate over residues 106 to 146; the sequence is SSTRMTPTESRTTSESTSDSTTLFPSSTEDTSSPTTPEGTD. Over residues 148 to 159 the composition is skewed to polar residues; it reads PMSTPSEESISS. 57 repeat units span residues 185 to 245, 246 to 300, 301 to 361, 362 to 418, 420 to 477, 479 to 538, 539 to 597, 598 to 654, 656 to 715, 716 to 774, 775 to 831, 833 to 892, 893 to 951, 952 to 1010, 1011 to 1069, 1070 to 1121, 1122 to 1187, 1188 to 1246, 1247 to 1305, 1306 to 1364, 1365 to 1423, 1424 to 1482, 1483 to 1541, 1542 to 1600, 1601 to 1656, 1658 to 1717, 1718 to 1776, 1777 to 1835, 1836 to 1895, 1896 to 1951, 1953 to 2012, 2013 to 2071, 2072 to 2127, 2129 to 2188, 2189 to 2247, 2248 to 2306, 2307 to 2365, 2366 to 2424, 2425 to 2483, 2484 to 2540, 2542 to 2601, 2602 to 2653, 2654 to 2719, 2720 to 2770, 2772 to 2837, 2838 to 2896, 2897 to 2955, 2956 to 3014, 3015 to 3073, 3074 to 3132, 3133 to 3191, 3192 to 3247, 3249 to 3308, 3309 to 3367, 3368 to 3426, 3427 to 3485, and 3486 to 3544. Positions 185–3727 are 59 X approximate tandem repeats; the sequence is STPLTTSTQA…SVVTSTPVTT (3543 aa). Residues 188 to 210 show a composition bias toward low complexity; sequence LTTSTQASSSPTTPESTTIPKST. Over residues 211–223 the composition is skewed to polar residues; that stretch reads NSEGSTPLTSMPA. The segment covering 308–323 has biased composition (low complexity); that stretch reads TSTEASSSPTTAEGTS. A compositionally biased stretch (polar residues) spans 324–344; sequence IPTSTYTEGSTPLTSTPASTM. Over residues 425 to 441 the composition is skewed to low complexity; the sequence is TTASEASSSPTTAEDTS. Disordered regions lie at residues 425–629, 644–868, 886–1104, 1116–1163, 1175–1279, and 1296–1338; these read TTAS…ERGT, SEAS…TPLT, STTP…TPLT, SEAS…TPLA, SEAN…GSTL, and STLL…GRTP. A compositionally biased stretch (polar residues) spans 442 to 483; it reads IATSTPSEGSTPLTSMPVSTTPVASSEASNLSTTPVDSKTQV. A glycan (N-linked (GlcNAc...) asparagine) is linked at Asn471. The span at 484–497 shows a compositional bias: low complexity; that stretch reads TTSTEASSSPPTAE. Residues 498–528 are compositionally biased toward polar residues; sequence VNSMPTSTPSEGSTPLTSMSVSTMPVASSEA. 2 stretches are compositionally biased toward low complexity: residues 529 to 573 and 584 to 618; these read STLS…TPLT and SSEA…EGTS. Polar residues-rich tracts occupy residues 619 to 629 and 644 to 660; these read MPTSTYSERGT and SEAS…NTPV. The span at 661–677 shows a compositional bias: low complexity; it reads TTSTEATSSSTTAEGTS. Positions 678-705 are enriched in polar residues; sequence MPTSTYTEGSTPLTSMPVNTTLVASSEA. A glycan (N-linked (GlcNAc...) asparagine) is linked at Asn696. Residues 706–733 show a composition bias toward low complexity; sequence STLSTTPVDTSTPVTTSTEASSSPTTAD. Residues 737–754 show a composition bias toward polar residues; sequence MPTSTPSEGSTPLTSMPV. Residues 755–776 are compositionally biased toward low complexity; that stretch reads SKTLLTSSEASTLSTTPLDTST. The segment covering 777–832 has biased composition (polar residues); it reads HITTSTEASCSPTTTEGTSMPISTPSEGSPLLTSIPVSITPVTSPEASTLSTTPVD. Low complexity predominate over residues 833 to 849; it reads SNSPVTTSTEVSSSPTP. A compositionally biased stretch (polar residues) spans 854-868; the sequence is SMPTSTYSEGRTPLT. Positions 886–900 are enriched in low complexity; the sequence is STTPVDTSTPVTNST. Asn898 carries an N-linked (GlcNAc...) asparagine glycan. Residues 901 to 944 are compositionally biased toward polar residues; that stretch reads EARSSPTTSEGTSMPTSTPGEGSTPLTSMPDSTTPVVSSEARTL. Positions 945–972 are enriched in low complexity; the sequence is SATPVDTSTPVTTSTEATSSPTTAEGTS. Positions 973-1011 are enriched in polar residues; sequence IPTSTPSEGTTPLTSTPVSHTLVANSEASTLSTTPVDSN. Residues 1012 to 1021 are compositionally biased toward low complexity; it reads TPLTTSTEAS. The span at 1029–1062 shows a compositional bias: polar residues; that stretch reads GTSMPTSTPSEGSTPLTRMPVSTTMVASSETSTL. Low complexity predominate over residues 1063–1090; that stretch reads STTPADTSTPVTTYSQASSSSTTADGTS. Composition is skewed to polar residues over residues 1091 to 1104 and 1116 to 1132; these read MPTS…TPLT and SEAS…SIPV. The segment covering 1133 to 1149 has biased composition (low complexity); it reads TTSTEASSSPTTAEGTS. Composition is skewed to polar residues over residues 1175 to 1198 and 1205 to 1222; these read SEAN…TEAS and EVTS…TPLT. Residues 1237–1279 show a composition bias toward low complexity; it reads STLSTSPVDTSTPVTTSAETSSSPTTAEGTSLPTSTTSEGSTL. Polar residues-rich tracts occupy residues 1310 to 1320 and 1326 to 1338; these read VTSNEVSSSPT and SMPT…GRTP. An N-linked (GlcNAc...) asparagine glycan is attached at Asn1345. Residues 1360 to 1394 are compositionally biased toward polar residues; sequence TPVDNSTPVTTSTEACSSPTTSEGTSMPNSNPSEG. Disordered regions lie at residues 1360–1516, 1537–1575, 1590–1930, 1947–2163, 2177–2281, 2295–2501, 2524–2630, 2647–2693, 2709–2751, 2765–2853, 2879–2925, 2942–3167, 3182–3577, 3589–3635, 3667–3701, 3785–3812, 3829–3849, 3892–3914, 3965–3988, and 4008–4129; these read TPVD…STAL, TPAV…STPL, ANTL…PLTS, STTL…RTPL, AIST…TTPL, EVST…TTAE, TTPV…TPSE, SSEA…RSTP, ASTL…DGST, SSEA…SPTT, TPVA…TPSE, GSEA…TPLT, STLS…GSSS, TSSE…EVST, ITST…TMPV, MTTA…TSER, PSEA…LLTS, ASIA…DTAS, VITS…FSTT, and STAP…TPTV. Low complexity-rich tracts occupy residues 1395-1415 and 1423-1442; these read TTPL…EAST and TSTP…TAEG. Residues 1461–1483 show a composition bias toward polar residues; sequence PVSNTPVANSEASTLSTTPVDSN. A compositionally biased stretch (low complexity) spans 1484-1499; it reads SPVVTSTAVSSSPTPA. Residues 1504–1516 are compositionally biased toward polar residues; it reads IAISTPSEGSTAL. Residues 1537–1547 are compositionally biased toward low complexity; the sequence is TPAVTSTPVTT. Composition is skewed to polar residues over residues 1548–1575 and 1590–1604; these read YSQA…STPL and ANTL…KTQV. The span at 1605-1620 shows a compositional bias: low complexity; it reads TASTEASSSTTAEGSS. 2 stretches are compositionally biased toward polar residues: residues 1621 to 1673 and 1679 to 1775; these read MTIS…SSPT and SMPT…TPID. The segment covering 1776–1797 has biased composition (low complexity); the sequence is TSTPVTTSTEATSSPTTAEGTS. Over residues 1798 to 1836 the composition is skewed to polar residues; the sequence is IPTSTLSEGMTPLTSTPVSHTLVANSEASTLSTTPVDSN. The segment covering 1837 to 1852 has biased composition (low complexity); it reads SPVVTSTAVSSSPTPA. The span at 1856 to 1883 shows a compositional bias: polar residues; sequence SIATSTPSEGSTALTSIPVSTTTVASSE. Over residues 1884 to 1900 the composition is skewed to low complexity; the sequence is TNTLSTTPAVTSTPVTT. Polar residues-rich tracts occupy residues 1901-1921 and 1947-1976; these read YAQV…TSTP and STTL…TSMP. Residues 1984–2033 are compositionally biased toward low complexity; it reads STPLTSMPLSTTLVVSSEASTLSTTPVDTSTPATTSTEGSSSPTTAGGTS. Polar residues-rich tracts occupy residues 2034-2043 and 2051-2077; these read IQTSTPSERT and VSTT…QVTN. Asn2077 carries an N-linked (GlcNAc...) asparagine glycan. Over residues 2078–2091 the composition is skewed to low complexity; it reads STEASSSATAEGSS. Over residues 2092–2156 the composition is skewed to polar residues; sequence MTISAPSEGS…EGTSMQTSTY (65 aa). Residues 2177–2196 show a composition bias toward low complexity; that stretch reads AISTLSTTPVDTSTPVTNST. The N-linked (GlcNAc...) asparagine glycan is linked to Asn2194. The span at 2197-2240 shows a compositional bias: polar residues; the sequence is EARSSPTTSEGTSMPTSTPSEGSTPFTSMPVSTMPVVTSEASTL. Residues 2241–2268 are compositionally biased toward low complexity; that stretch reads SATPVDTSTPVTTSTEATSSPTTAEGTS. 2 stretches are compositionally biased toward polar residues: residues 2269 to 2281 and 2295 to 2307; these read IPTS…TTPL and EVST…VDSN. Over residues 2308-2317 the composition is skewed to low complexity; sequence TPFTTSTEAS. A compositionally biased stretch (polar residues) spans 2325-2358; that stretch reads GTSMPTSTSSEGNTPLTRMPVSTTMVASFETSTL. Residues 2359 to 2371 are compositionally biased toward low complexity; it reads STTPADTSTPVTT. Residues 2372 to 2395 show a composition bias toward polar residues; that stretch reads YSQAGSSPTTADDTSMPTSTYSEG. Composition is skewed to low complexity over residues 2396-2445 and 2462-2499; these read STPL…EGTS and PVST…SPTT. Positions 2524–2547 are enriched in polar residues; the sequence is TTPVASPEASTLSTTPVDSNSPVV. Over residues 2548–2563 the composition is skewed to low complexity; sequence TSTEISSSATSAEGTS. Positions 2564 to 2576 are enriched in polar residues; that stretch reads MPTSTYSEGSTPL. Over residues 2586–2617 the composition is skewed to low complexity; sequence LASSEASTLSTTPVDTSIPVTTSTETSSSPTT. The span at 2618–2628 shows a compositional bias: polar residues; sequence AKDTSMPISTP. The segment covering 2654–2681 has biased composition (low complexity); it reads STTPVDTRTLVTTSTGTSSSPTTAEGSS. The span at 2682-2693 shows a compositional bias: polar residues; sequence MPTSTPGERSTP. Residues 2710–2740 show a composition bias toward low complexity; sequence STLSTTPVDTSTPVTTSAEASSSPTTAEGTS. A compositionally biased stretch (polar residues) spans 2741–2751; sequence MRISTPSDGST. Composition is skewed to low complexity over residues 2765 to 2816 and 2829 to 2853; these read SSEA…TSMP and TLST…SPTT. Polar residues predominate over residues 2879–2900; it reads TPVASSEASTLSTTPVDTSIPV. Low complexity-rich tracts occupy residues 2901–2917 and 2950–2976; these read TTST…EGTS and TTPV…EGTS. A compositionally biased stretch (polar residues) spans 2988 to 3009; it reads PLTSMSVSTMPVASSEASTLSR. Low complexity predominate over residues 3010 to 3031; it reads TPADTSTPVTTSTEASSSPTTA. The segment covering 3037–3057 has biased composition (polar residues); the sequence is PISTPSEGSTPLTSIPVSTTP. Low complexity-rich tracts occupy residues 3073 to 3089 and 3104 to 3140; these read SNSP…SPTP and STPL…TTST. The span at 3141 to 3166 shows a compositional bias: polar residues; sequence EAHSSPTTSEGTSMPTSTPSEGSTPL. The segment covering 3185-3211 has biased composition (low complexity); sequence SATPVDTSTPVTTSTEATSSTTAEGTS. Polar residues predominate over residues 3212–3253; that stretch reads IPTSTPSEGMTPLTSVPVSNTPVASSEASILSTTPVDSNTPL. The span at 3254–3267 shows a compositional bias: low complexity; sequence TTSTEASSSPPTAE. Over residues 3268–3288 the composition is skewed to polar residues; sequence GTSMPTSTPSEGSTPLTSMPV. Positions 3289 to 3314 are enriched in low complexity; sequence STTTVASSETSTLSTTPADTSTPVTT. A compositionally biased stretch (polar residues) spans 3329-3357; sequence SMPTSTYSEGSTPLTNMSFSTTPVVSSEA. Asn3344 carries an N-linked (GlcNAc...) asparagine glycan. The span at 3358–3375 shows a compositional bias: low complexity; it reads STLSTTPVDTSTPVTTST. The segment covering 3376 to 3401 has biased composition (polar residues); that stretch reads EASLSPTTAEGTSIPTSSPSEGTTPL. A compositionally biased stretch (low complexity) spans 3405 to 3414; the sequence is PVSTTPVVSS. Composition is skewed to polar residues over residues 3415–3441 and 3447–3475; these read EVNT…SSPT and SLPT…SSEA. Residues 3476-3501 show a composition bias toward low complexity; sequence STLSTTPVDTSTPVTTSSPTNSSPTT. 2 stretches are compositionally biased toward polar residues: residues 3502-3549 and 3558-3571; these read AEVT…TFVT and PATL…MSTP. The span at 3589–3616 shows a compositional bias: low complexity; the sequence is TSSEASTPSTPSVDRSTPVTTSTQSNST. 2 tandem repeats follow at residues 3604 to 3662 and 3663 to 3727. The segment covering 3626 to 3635 has biased composition (polar residues); the sequence is PMSTPSEVST. The segment covering 3667-3679 has biased composition (low complexity); the sequence is ITSTQVSSSPVTP. Composition is skewed to polar residues over residues 3690–3701 and 3785–3806; these read SEGSTPLTTMPV and MTTA…TMPM. Composition is skewed to low complexity over residues 3967–3988, 4008–4083, and 4090–4129; these read TSTE…FSTT, STAP…SSTT, and TTMT…TPTV. The N-linked (GlcNAc...) asparagine glycan is linked to Asn4116. The region spanning 4131–4170 is the EGF-like domain; the sequence is RTTTCFGDGCQNTASRCKNGGTWDGLKCQCPNLYYGELCE. Cystine bridges form between Cys4135-Cys4147, Cys4140-Cys4158, and Cys4160-Cys4169. Positions 4184 to 4291 constitute an SEA domain; sequence ISAQMELTVT…QQIMINDICS (108 aa). N-linked (GlcNAc...) asparagine glycosylation is found at Asn4205, Asn4236, Asn4267, Asn4297, and Asn4305. Residues 4394-4414 form a helical membrane-spanning segment; it reads LVGAGVVLMLIILVALLMLVF. Residues 4415 to 4493 lie on the Cytoplasmic side of the membrane; it reads RSKREVKRQK…QRPQVMTTSF (79 aa).

As to quaternary structure, interacts via its C-terminus with PDZK1 and this interaction appears important for proper localization. In terms of processing, probably cleaved within the SEA domain. Post-translationally, N-glycosylated. Contains high mannose and complex-type glycans. The forms containing the complex type glycans localize to the cell surface. Not O-glycosylated. In terms of tissue distribution, expressed almost exclusively in the intestine. Expression is especially high in both the duodenum and transverse colon. Expressed in mature absorptive cells of the small intestinal villi. No expression is detected in goblet cells. Highly expressed in pancreatic adenocarcinoma tissue (at protein level). Expression is not detectable in normal pancreas, in pancreatitis or in cell lines derived from other cancers.

Its subcellular location is the cell membrane. It localises to the secreted. In terms of biological role, probably plays a role in maintaining homeostasis on mucosal surfaces. This Homo sapiens (Human) protein is Mucin-17 (MUC17).